We begin with the raw amino-acid sequence, 309 residues long: Manganese-dependent inorganic pyrophosphatase (309 aa).

Mn(2+) is bound by residues His9, Asp13, Asp15, Asp75, His97, and Asp149.

Homodimer. Mn(2+) serves as cofactor.

It localises to the cytoplasm. It catalyses the reaction diphosphate + H2O = 2 phosphate + H(+). The sequence is that of Manganese-dependent inorganic pyrophosphatase (ppaC) from Bacillus subtilis (strain 168).